A 471-amino-acid polypeptide reads, in one-letter code: Tryptophanase (471 aa).

N6-acetyllysine occurs at positions 5, 115, and 156. N6-(pyridoxal phosphate)lysine is present on lysine 270. An N6-acetyllysine modification is found at lysine 450.

It belongs to the beta-eliminating lyase family. As to quaternary structure, homotetramer. Pyridoxal 5'-phosphate serves as cofactor.

The enzyme catalyses L-tryptophan + H2O = indole + pyruvate + NH4(+). The protein operates within amino-acid degradation; L-tryptophan degradation via pyruvate pathway; indole and pyruvate from L-tryptophan: step 1/1. This chain is Tryptophanase, found in Escherichia fergusonii (strain ATCC 35469 / DSM 13698 / CCUG 18766 / IAM 14443 / JCM 21226 / LMG 7866 / NBRC 102419 / NCTC 12128 / CDC 0568-73).